Reading from the N-terminus, the 274-residue chain is Protein CIMAP1C (274 aa).

Residues 1-27 form a disordered region; it reads MKLPKGTRSSVYFAQHPEKEPLPSRQE. The span at 16 to 27 shows a compositional bias: basic and acidic residues; the sequence is HPEKEPLPSRQE. 2 STPGR repeats span residues 199 to 224 and 235 to 260; these read PGPTTYARPEPSIYQNRSPTYSMAKR and PGPGSHEVQQVTVHKPHIPAFTMGIK.

It belongs to the CIMAP family.

The polypeptide is Protein CIMAP1C (Homo sapiens (Human)).